The following is a 675-amino-acid chain: Alpha-1,4-glucan:maltose-1-phosphate maltosyltransferase 1 (675 aa).

Positions 264, 324, and 359 each coordinate alpha-maltose 1-phosphate. Asp-394 acts as the Nucleophile in catalysis. Position 395 (Asn-395) interacts with alpha-maltose 1-phosphate. Glu-423 serves as the catalytic Proton donor. 534-535 (KY) is a binding site for alpha-maltose 1-phosphate.

This sequence belongs to the glycosyl hydrolase 13 family. GlgE subfamily. As to quaternary structure, homodimer.

The catalysed reaction is alpha-maltose 1-phosphate + [(1-&gt;4)-alpha-D-glucosyl](n) = [(1-&gt;4)-alpha-D-glucosyl](n+2) + phosphate. Its activity is regulated as follows. Is competitively inhibited by alpha-, beta- and gamma-cyclodextrins (cyclic maltooligosaccharides), unlike GlgE from M.tuberculosis. In terms of biological role, maltosyltransferase that uses maltose 1-phosphate (M1P) as the sugar donor to elongate linear or branched alpha-(1-&gt;4)-glucans. Maltooligosaccharides with a degree of polymerization (DP) superior or equal to 4 are efficient acceptors, with DP6 being optimal in the GlgE-catalyzed polymerization with M1P. Is specific for the alpha-anomer of M1P as substrate, since the beta-anomer of M1P gives no activity. Alpha-D-glucose 1-phosphate cannot serve as a donor substrate, but alpha-maltosyl fluoride is an efficient donor in vitro. Exhibits an alpha-retaining catalytic mechanism, with evidence that maltooligosaccharide acceptors are extended at their non-reducing ends. Is also able to catalyze the reverse reaction in vitro, releasing M1P from glycogen or maltoheptaose in the presence of inorganic phosphate. Also catalyzes disproportionation reactions through maltosyl transfer between maltooligosaccharides. Is probably involved in a branched alpha-glucan biosynthetic pathway from trehalose, together with TreS, Mak and GlgB. This Streptomyces coelicolor (strain ATCC BAA-471 / A3(2) / M145) protein is Alpha-1,4-glucan:maltose-1-phosphate maltosyltransferase 1 (glgE1).